Consider the following 489-residue polypeptide: Adenosylhomocysteinase (489 aa).

T68, D151, and E213 together coordinate substrate. An NAD(+)-binding site is contributed by 214–216; that stretch reads TTT. Residues K243 and D247 each contribute to the substrate site. NAD(+) contacts are provided by residues N248, 277 to 282, E300, N335, 356 to 358, and N403; these read GYGDVG and IGH.

The protein belongs to the adenosylhomocysteinase family. Requires NAD(+) as cofactor.

The protein localises to the cytoplasm. The enzyme catalyses S-adenosyl-L-homocysteine + H2O = L-homocysteine + adenosine. It participates in amino-acid biosynthesis; L-homocysteine biosynthesis; L-homocysteine from S-adenosyl-L-homocysteine: step 1/1. Its function is as follows. May play a key role in the regulation of the intracellular concentration of adenosylhomocysteine. The polypeptide is Adenosylhomocysteinase (Mycobacterium sp. (strain JLS)).